The following is a 561-amino-acid chain: Putative transport protein YbjL (561 aa).

Transmembrane regions (helical) follow at residues 8–28 (LLNGNYILLLFVVLALGLCLG), 32–52 (LGSVQLGNSIGVLVVSLLLGQ), 66–86 (FMLFIFCVGVEAGPNFFSIFF), 94–114 (MLALVMVGSALLIALGLGKLF), and 158–178 (NLSLGYALTYLIGLVSLIVGA). 2 RCK C-terminal domains span residues 200–288 (RGLD…SFRN) and 292–373 (VFDR…RIGF). 5 helical membrane-spanning segments follow: residues 383 to 403 (LLAFCAFFIIGLMIGMITFQF), 406 to 426 (FSFGIGNAAGLLFAGIMLGFL), 447 to 467 (FGLMVFMAGVGLSAGSGISNG), 475 to 495 (MLIAGLVVSLIPVVICFLFGA), and 540 to 560 (AIANVLLTLAGTLIVIIWPGL).

It belongs to the AAE transporter (TC 2.A.81) family. YbjL subfamily.

The protein resides in the cell membrane. This Salmonella typhi protein is Putative transport protein YbjL.